Here is a 514-residue protein sequence, read N- to C-terminus: Putative fumarate hydratase class I (514 aa).

[4Fe-4S] cluster contacts are provided by Cys-62, Cys-187, and Cys-274.

It belongs to the class-I fumarase family. In terms of assembly, homodimer. [4Fe-4S] cluster serves as cofactor.

It catalyses the reaction (S)-malate = fumarate + H2O. It functions in the pathway carbohydrate metabolism; tricarboxylic acid cycle; (S)-malate from fumarate: step 1/1. Catalyzes the reversible hydration of fumarate to (S)-malate. In Geobacillus stearothermophilus (Bacillus stearothermophilus), this protein is Putative fumarate hydratase class I (fumA).